Here is a 60-residue protein sequence, read N- to C-terminus: Regulatory protein DegR (60 aa).

Functionally, stabilizes the phosphorylated form of DegU, leading to enhanced production of levansucrase, alkaline protease, and neutral protease. The sequence is that of Regulatory protein DegR (degR) from Bacillus subtilis subsp. natto.